A 114-amino-acid polypeptide reads, in one-letter code: T cell receptor alpha variable 24 (114 aa).

The signal sequence occupies residues 1–22 (MEKNPLAAPLLILWFHLDCVSS). One can recognise an Ig-like domain in the interval 23–114 (ILNVEQSPQS…EDSATYLCAF (92 aa)). Asparagine 42 carries an N-linked (GlcNAc...) asparagine glycan. Cysteine 45 and cysteine 112 are oxidised to a cystine.

As to quaternary structure, alpha-beta TR is a heterodimer composed of an alpha and beta chain; disulfide-linked. The alpha-beta TR is associated with the transmembrane signaling CD3 coreceptor proteins to form the TR-CD3 (TcR or TCR). The assembly of alpha-beta TR heterodimers with CD3 occurs in the endoplasmic reticulum where a single alpha-beta TR heterodimer associates with one CD3D-CD3E heterodimer, one CD3G-CD3E heterodimer and one CD247 homodimer forming a stable octameric structure. CD3D-CD3E and CD3G-CD3E heterodimers preferentially associate with TR alpha and TR beta chains, respectively. The association of the CD247 homodimer is the last step of TcR assembly in the endoplasmic reticulum and is required for transport to the cell surface.

Its subcellular location is the cell membrane. V region of the variable domain of T cell receptor (TR) alpha chain that participates in the antigen recognition. Alpha-beta T cell receptors are antigen specific receptors which are essential to the immune response and are present on the cell surface of T lymphocytes. Recognize peptide-major histocompatibility (MH) (pMH) complexes that are displayed by antigen presenting cells (APC), a prerequisite for efficient T cell adaptive immunity against pathogens. Binding of alpha-beta TR to pMH complex initiates TR-CD3 clustering on the cell surface and intracellular activation of LCK that phosphorylates the ITAM motifs of CD3G, CD3D, CD3E and CD247 enabling the recruitment of ZAP70. In turn ZAP70 phosphorylates LAT, which recruits numerous signaling molecules to form the LAT signalosome. The LAT signalosome propagates signal branching to three major signaling pathways, the calcium, the mitogen-activated protein kinase (MAPK) kinase and the nuclear factor NF-kappa-B (NF-kB) pathways, leading to the mobilization of transcription factors that are critical for gene expression and essential for T cell growth and differentiation. The T cell repertoire is generated in the thymus, by V-(D)-J rearrangement. This repertoire is then shaped by intrathymic selection events to generate a peripheral T cell pool of self-MH restricted, non-autoaggressive T cells. Post-thymic interaction of alpha-beta TR with the pMH complexes shapes TR structural and functional avidity. This Homo sapiens (Human) protein is T cell receptor alpha variable 24.